The primary structure comprises 332 residues: L-lactate dehydrogenase A chain (332 aa).

Alanine 2 is subject to N-acetylalanine. Lysine 5 is subject to N6-acetyllysine; alternate. Lysine 5 carries the post-translational modification N6-succinyllysine; alternate. Residue lysine 14 is modified to N6-acetyllysine. Residue 29–57 (GAVGMACAISILMKDLADELALVDVMEDK) coordinates NAD(+). Position 57 is an N6-acetyllysine; alternate (lysine 57). Lysine 57 participates in a covalent cross-link: Glycyl lysine isopeptide (Lys-Gly) (interchain with G-Cter in SUMO2); alternate. Lysine 81 is modified (N6-acetyllysine). Residue arginine 99 participates in NAD(+) binding. Residue arginine 106 coordinates substrate. Residue lysine 118 is modified to N6-acetyllysine; alternate. Lysine 118 is modified (N6-succinyllysine; alternate). Lysine 126 carries the N6-acetyllysine modification. Asparagine 138 serves as a coordination point for NAD(+). The substrate site is built by asparagine 138 and arginine 169. Catalysis depends on histidine 193, which acts as the Proton acceptor. 2 positions are modified to N6-acetyllysine: lysine 224 and lysine 232. Residue tyrosine 239 is modified to Phosphotyrosine. Residue lysine 243 is modified to N6-acetyllysine. Residue threonine 248 coordinates substrate. Threonine 309 bears the Phosphothreonine mark. Phosphoserine is present on serine 310. At lysine 318 the chain carries N6-acetyllysine; alternate. Position 318 is an N6-succinyllysine; alternate (lysine 318). The residue at position 322 (threonine 322) is a Phosphothreonine.

The protein belongs to the LDH/MDH superfamily. LDH family. As to quaternary structure, homotetramer. Interacts with PTEN upstream reading frame protein MP31. Post-translationally, ISGylated.

It is found in the cytoplasm. It carries out the reaction (S)-lactate + NAD(+) = pyruvate + NADH + H(+). Its pathway is fermentation; pyruvate fermentation to lactate; (S)-lactate from pyruvate: step 1/1. Functionally, interconverts simultaneously and stereospecifically pyruvate and lactate with concomitant interconversion of NADH and NAD(+). The protein is L-lactate dehydrogenase A chain (LDHA) of Oryctolagus cuniculus (Rabbit).